The following is a 70-amino-acid chain: Large ribosomal subunit protein eL38 (70 aa).

This sequence belongs to the eukaryotic ribosomal protein eL38 family.

In Julodis onopordi (Jewel beetle), this protein is Large ribosomal subunit protein eL38 (RpL38).